The sequence spans 416 residues: Lipoyl synthase, mitochondrial (416 aa).

The transit peptide at 1–33 (MAAASTNRLRLLYTSTRASLPQSTPSILTTRTY) directs the protein to the mitochondrion. Residues 20–52 (LPQSTPSILTTRTYATTDSSTSATSTPKPRRRT) form a disordered region. Low complexity predominate over residues 29–46 (TTRTYATTDSSTSATSTP). Positions 133, 138, 144, 164, 168, 171, and 379 each coordinate [4Fe-4S] cluster. A Radical SAM core domain is found at 147-368 (GGDKAAATAT…QRRAEELGFL (222 aa)).

This sequence belongs to the radical SAM superfamily. Lipoyl synthase family. [4Fe-4S] cluster is required as a cofactor.

The protein localises to the mitochondrion. It catalyses the reaction [[Fe-S] cluster scaffold protein carrying a second [4Fe-4S](2+) cluster] + N(6)-octanoyl-L-lysyl-[protein] + 2 oxidized [2Fe-2S]-[ferredoxin] + 2 S-adenosyl-L-methionine + 4 H(+) = [[Fe-S] cluster scaffold protein] + N(6)-[(R)-dihydrolipoyl]-L-lysyl-[protein] + 4 Fe(3+) + 2 hydrogen sulfide + 2 5'-deoxyadenosine + 2 L-methionine + 2 reduced [2Fe-2S]-[ferredoxin]. The protein operates within protein modification; protein lipoylation via endogenous pathway; protein N(6)-(lipoyl)lysine from octanoyl-[acyl-carrier-protein]: step 2/2. Its function is as follows. Catalyzes the radical-mediated insertion of two sulfur atoms into the C-6 and C-8 positions of the octanoyl moiety bound to the lipoyl domains of lipoate-dependent enzymes, thereby converting the octanoylated domains into lipoylated derivatives. This chain is Lipoyl synthase, mitochondrial, found in Aspergillus niger (strain ATCC MYA-4892 / CBS 513.88 / FGSC A1513).